We begin with the raw amino-acid sequence, 353 residues long: Photosystem II protein D1 (353 aa).

Thr2 is modified (N-acetylthreonine). Thr2 is modified (phosphothreonine). The next 3 helical transmembrane spans lie at 29–46, 118–133, and 142–156; these read YIGW…TATS, HFLL…EWEL, and WIAV…AATA. Position 118 (His118) interacts with chlorophyll a. Tyr126 is a binding site for pheophytin a. [CaMn4O5] cluster contacts are provided by Asp170 and Glu189. The helical transmembrane segment at 197–218 threads the bilayer; it reads FHMLGVAGVFGGSLFSAMHGSL. His198 contributes to the chlorophyll a binding site. A quinone-binding positions include His215 and 264–265; that span reads SF. His215 is a Fe cation binding site. His272 is a binding site for Fe cation. Residues 274–288 form a helical membrane-spanning segment; that stretch reads FLAAWPVVGIWFTAL. His332, Glu333, Asp342, and Ala344 together coordinate [CaMn4O5] cluster. Residues 345-353 constitute a propeptide that is removed on maturation; it reads SVELDSIDG.

Belongs to the reaction center PufL/M/PsbA/D family. In terms of assembly, PSII is composed of 1 copy each of membrane proteins PsbA, PsbB, PsbC, PsbD, PsbE, PsbF, PsbH, PsbI, PsbJ, PsbK, PsbL, PsbM, PsbT, PsbX, PsbY, PsbZ, Psb30/Ycf12, at least 3 peripheral proteins of the oxygen-evolving complex and a large number of cofactors. It forms dimeric complexes. The D1/D2 heterodimer binds P680, chlorophylls that are the primary electron donor of PSII, and subsequent electron acceptors. It shares a non-heme iron and each subunit binds pheophytin, quinone, additional chlorophylls, carotenoids and lipids. D1 provides most of the ligands for the Mn4-Ca-O5 cluster of the oxygen-evolving complex (OEC). There is also a Cl(-1) ion associated with D1 and D2, which is required for oxygen evolution. The PSII complex binds additional chlorophylls, carotenoids and specific lipids. is required as a cofactor. Tyr-161 forms a radical intermediate that is referred to as redox-active TyrZ, YZ or Y-Z. Post-translationally, C-terminally processed by CTPA; processing is essential to allow assembly of the oxygen-evolving complex and thus photosynthetic growth.

It is found in the plastid. The protein resides in the chloroplast thylakoid membrane. It carries out the reaction 2 a plastoquinone + 4 hnu + 2 H2O = 2 a plastoquinol + O2. Functionally, photosystem II (PSII) is a light-driven water:plastoquinone oxidoreductase that uses light energy to abstract electrons from H(2)O, generating O(2) and a proton gradient subsequently used for ATP formation. It consists of a core antenna complex that captures photons, and an electron transfer chain that converts photonic excitation into a charge separation. The D1/D2 (PsbA/PsbD) reaction center heterodimer binds P680, the primary electron donor of PSII as well as several subsequent electron acceptors. The chain is Photosystem II protein D1 from Gnetum parvifolium (Small-leaved jointfir).